The sequence spans 573 residues: Hemagglutinin-neuraminidase (573 aa).

The Intravirion portion of the chain corresponds to 1–27; that stretch reads MQDSHGNTQILNQANSMVKRTWRLLFR. A helical transmembrane segment spans residues 28–48; that stretch reads IATLILLVSIFVLSLIIVLQS. At 49-573 the chain is on the virion surface side; it reads TPGNLQNDIN…DFQITLFLAA (525 aa). 3 cysteine pairs are disulfide-bonded: C173–C197, C187–C248, and C239–C252. Residues 235 to 240 form an involved in neuraminidase activity region; sequence NRKSCS. 4 N-linked (GlcNAc...) asparagine; by host glycosylation sites follow: N258, N330, N339, and N347. 3 disulfide bridges follow: C345–C466, C377–C387, and C460–C470. The N-linked (GlcNAc...) asparagine; by host glycan is linked to N433. 2 N-linked (GlcNAc...) asparagine; by host glycosylation sites follow: N502 and N530. A disulfide bond links C540 and C551.

This sequence belongs to the paramyxoviruses hemagglutinin-neuraminidase family. As to quaternary structure, homotetramer; composed of disulfide-linked homodimers. Interacts with F protein trimer.

It is found in the virion membrane. The protein resides in the host cell membrane. The catalysed reaction is Hydrolysis of alpha-(2-&gt;3)-, alpha-(2-&gt;6)-, alpha-(2-&gt;8)- glycosidic linkages of terminal sialic acid residues in oligosaccharides, glycoproteins, glycolipids, colominic acid and synthetic substrates.. Functionally, attaches the virus to sialic acid-containing cell receptors and thereby initiating infection. Binding of HN protein to the receptor induces a conformational change that allows the F protein to trigger virion/cell membranes fusion. In terms of biological role, neuraminidase activity ensures the efficient spread of the virus by dissociating the mature virions from the neuraminic acid containing glycoproteins. The polypeptide is Hemagglutinin-neuraminidase (HN) (Homo sapiens (Human)).